The following is a 145-amino-acid chain: uncharacterized protein (145 aa).

The interval 1–49 is disordered; that stretch reads MLSIFKNLLGTSEEDGTTQEANSKDTKGLKEERKRKKRKNKYKIPPGHT. The segment covering 22-32 has biased composition (basic and acidic residues); that stretch reads NSKDTKGLKEE. The segment covering 33 to 42 has biased composition (basic residues); that stretch reads RKRKKRKNKY. Phosphoserine is present on serine 68. One can recognise a Cytochrome b5 heme-binding domain in the interval 69-145; the sequence is PISVTAEELA…LKTSFVGYLV (77 aa). Heme contacts are provided by histidine 104 and histidine 127.

The protein belongs to the cytochrome b5 family.

Its subcellular location is the cytoplasm. This is an uncharacterized protein from Schizosaccharomyces pombe (strain 972 / ATCC 24843) (Fission yeast).